Reading from the N-terminus, the 143-residue chain is Transcriptional regulator MraZ (143 aa).

2 SpoVT-AbrB domains span residues 5 to 47 (EYLH…PLDE) and 76 to 119 (ATEC…SQAL).

Belongs to the MraZ family. Forms oligomers.

Its subcellular location is the cytoplasm. It localises to the nucleoid. The sequence is that of Transcriptional regulator MraZ from Desulfitobacterium hafniense (strain Y51).